Reading from the N-terminus, the 410-residue chain is Protein king tubby 1 (410 aa).

2 disordered regions span residues 44–109 (QFMM…STRH) and 121–159 (ISPA…EGDV). The span at 47–72 (MSPNNPDQILTSTGNASVTTTPTSPY) shows a compositional bias: polar residues. Over residues 132 to 143 (SHHDSSSGKSVE) the composition is skewed to basic and acidic residues.

The protein belongs to the TUB family.

Its subcellular location is the cytoplasm. The protein localises to the nucleus. The sequence is that of Protein king tubby 1 (king-tubby1) from Aedes aegypti (Yellowfever mosquito).